A 409-amino-acid chain; its full sequence is MLIDYLNHQLREREAQGLTRQRRIAESPCAPRQRVSQRGQPARDLLAFCSNDYLGLANHPALVRALAEGAQLYGAGSGASHLISGHSEAHAALEADLAAWLAPCIPNAQALYFCTGYMANLALLTALGGANATIFADKLNHASLVDGALLAKATLQRYAHKSLAVLARQLAACDTPIKLIVTDAVFSMDGDVADLPELLALAERFDAWLVVDDAHGFGVLGEEGRGSLSHFGLCSERLICMGTLGKAAGVGGAFVAAHPSIIDWLVQTARPYIYTTAAPPAVAHALRESLRLIGGTEGDQRRKQLQQLISQLRSQLAELIAAQPALGWHLADSSTAIQPLIVGSNEAALALAAALDAQGLWVPAIRPPTVPAGTARLRITLSASHSADDVRQLVDALAQAGKDLAGAQP.

Arg-20 serves as a coordination point for substrate. 116–117 (GY) is a pyridoxal 5'-phosphate binding site. Position 141 (His-141) interacts with substrate. Residues Ser-187, His-215, and Thr-243 each coordinate pyridoxal 5'-phosphate. The residue at position 246 (Lys-246) is an N6-(pyridoxal phosphate)lysine. Thr-369 lines the substrate pocket.

This sequence belongs to the class-II pyridoxal-phosphate-dependent aminotransferase family. BioF subfamily. Homodimer. Requires pyridoxal 5'-phosphate as cofactor.

The enzyme catalyses 6-carboxyhexanoyl-[ACP] + L-alanine + H(+) = (8S)-8-amino-7-oxononanoate + holo-[ACP] + CO2. It functions in the pathway cofactor biosynthesis; biotin biosynthesis. Its function is as follows. Catalyzes the decarboxylative condensation of pimeloyl-[acyl-carrier protein] and L-alanine to produce 8-amino-7-oxononanoate (AON), [acyl-carrier protein], and carbon dioxide. The polypeptide is 8-amino-7-oxononanoate synthase (Polaromonas naphthalenivorans (strain CJ2)).